Consider the following 241-residue polypeptide: MKLSEIYNFLDQLSPFNIQESWDNSGILLGDRDSEISTVYLSLDIDENIIKEASENSLIITHHPLIFKGLKDLYDKTYPRAFIKEMIYKNISLISMHTNYDLSHLNTYFTEEILGFKISFKDKFLIYVENSMSFEALCDWVKKKLNLQILRVSDCGKKDIKRIAICTGSGGDLISKVDADCFLSGDFKYHQALEALSNQISLIDLGHFESERYFSQCLAKDLKNLPLQVIITVSKNPFQYF.

Residues His-62, His-63, Asp-101, His-207, and Glu-211 each coordinate a divalent metal cation.

Belongs to the GTP cyclohydrolase I type 2/NIF3 family. As to quaternary structure, homohexamer.

This Campylobacter jejuni subsp. jejuni serotype O:2 (strain ATCC 700819 / NCTC 11168) protein is GTP cyclohydrolase 1 type 2 homolog.